Reading from the N-terminus, the 647-residue chain is Acetyl-coenzyme A synthetase (647 aa).

CoA contacts are provided by residues 192–195 (RGGR), threonine 310, and asparagine 334. ATP is bound by residues 386–388 (GEP), 410–415 (DTWWQT), aspartate 499, and arginine 514. Serine 522 is a CoA binding site. Residue arginine 525 coordinates ATP. The Mg(2+) site is built by valine 536, histidine 538, and valine 541. Arginine 583 contacts CoA. An N6-acetyllysine modification is found at lysine 608.

This sequence belongs to the ATP-dependent AMP-binding enzyme family. The cofactor is Mg(2+). Acetylated. Deacetylation by the SIR2-homolog deacetylase activates the enzyme.

It catalyses the reaction acetate + ATP + CoA = acetyl-CoA + AMP + diphosphate. Its function is as follows. Catalyzes the conversion of acetate into acetyl-CoA (AcCoA), an essential intermediate at the junction of anabolic and catabolic pathways. AcsA undergoes a two-step reaction. In the first half reaction, AcsA combines acetate with ATP to form acetyl-adenylate (AcAMP) intermediate. In the second half reaction, it can then transfer the acetyl group from AcAMP to the sulfhydryl group of CoA, forming the product AcCoA. This is Acetyl-coenzyme A synthetase from Caulobacter vibrioides (strain ATCC 19089 / CIP 103742 / CB 15) (Caulobacter crescentus).